Here is a 123-residue protein sequence, read N- to C-terminus: Thioredoxin domain-containing protein 17 (123 aa).

N-acetylalanine is present on Ala2. One can recognise a Thioredoxin domain in the interval 41–123 (SWCPDCVEAE…SLVEMIFSED (83 aa)). Active-site nucleophile residues include Cys43 and Cys46. A disulfide bridge links Cys43 with Cys46.

The protein belongs to the thioredoxin family. As to quaternary structure, interacts with TRXR1 and DYNLL1/DNCL1. Post-translationally, the oxidized protein is reduced by TRXR1.

It localises to the cytoplasm. Its function is as follows. Disulfide reductase. May participate in various redox reactions through the reversible oxidation of its active center dithiol to a disulfide and catalyze dithiol-disulfide exchange reactions. Modulates TNF-alpha signaling and NF-kappa-B activation. Has peroxidase activity and may contribute to the elimination of cellular hydrogen peroxide. The polypeptide is Thioredoxin domain-containing protein 17 (Txndc17) (Mus musculus (Mouse)).